The following is a 520-amino-acid chain: Cholesterol side-chain cleavage enzyme, mitochondrial (520 aa).

Residues Met1–Cys39 constitute a mitochondrion transit peptide. Residue Cys461 participates in heme binding.

Belongs to the cytochrome P450 family. As to quaternary structure, interacts with FDX1/adrenodoxin. It depends on heme as a cofactor.

The protein localises to the mitochondrion inner membrane. The enzyme catalyses 6 reduced [adrenodoxin] + cholesterol + 3 O2 + 6 H(+) = 4-methylpentanal + pregnenolone + 6 oxidized [adrenodoxin] + 4 H2O. The catalysed reaction is 2 reduced [adrenodoxin] + cholesterol + O2 + 2 H(+) = (22R)-hydroxycholesterol + 2 oxidized [adrenodoxin] + H2O. It catalyses the reaction (22R)-hydroxycholesterol + 2 reduced [adrenodoxin] + O2 + 2 H(+) = (20R,22R)-20,22-dihydroxycholesterol + 2 oxidized [adrenodoxin] + H2O. It carries out the reaction (20R,22R)-20,22-dihydroxycholesterol + 2 reduced [adrenodoxin] + O2 + 2 H(+) = 4-methylpentanal + pregnenolone + 2 oxidized [adrenodoxin] + 2 H2O. It functions in the pathway lipid metabolism; C21-steroid hormone metabolism. The protein operates within steroid metabolism; cholesterol metabolism. Its function is as follows. A cytochrome P450 monooxygenase that catalyzes the side-chain hydroxylation and cleavage of cholesterol to pregnenolone, the precursor of most steroid hormones. Catalyzes three sequential oxidation reactions of cholesterol, namely the hydroxylation at C22 followed with the hydroxylation at C20 to yield 20R,22R-hydroxycholesterol that is further cleaved between C20 and C22 to yield the C21-steroid pregnenolone and 4-methylpentanal. Mechanistically, uses molecular oxygen inserting one oxygen atom into a substrate and reducing the second into a water molecule. Two electrons are provided by NADPH via a two-protein mitochondrial transfer system comprising flavoprotein FDXR (adrenodoxin/ferredoxin reductase) and nonheme iron-sulfur protein FDX1 or FDX2 (adrenodoxin/ferredoxin). The sequence is that of Cholesterol side-chain cleavage enzyme, mitochondrial (CYP11A1) from Sus scrofa (Pig).